A 282-amino-acid polypeptide reads, in one-letter code: Bifunctional protein FolD (282 aa).

NADP(+) is bound by residues 163 to 165 (NRS), threonine 188, and isoleucine 229.

This sequence belongs to the tetrahydrofolate dehydrogenase/cyclohydrolase family. As to quaternary structure, homodimer.

The enzyme catalyses (6R)-5,10-methylene-5,6,7,8-tetrahydrofolate + NADP(+) = (6R)-5,10-methenyltetrahydrofolate + NADPH. It carries out the reaction (6R)-5,10-methenyltetrahydrofolate + H2O = (6R)-10-formyltetrahydrofolate + H(+). It participates in one-carbon metabolism; tetrahydrofolate interconversion. Functionally, catalyzes the oxidation of 5,10-methylenetetrahydrofolate to 5,10-methenyltetrahydrofolate and then the hydrolysis of 5,10-methenyltetrahydrofolate to 10-formyltetrahydrofolate. In Malacoplasma penetrans (strain HF-2) (Mycoplasma penetrans), this protein is Bifunctional protein FolD.